Consider the following 647-residue polypeptide: uncharacterized protein (647 aa).

This is an uncharacterized protein from Cryphonectria parasitica mycoreovirus 1 (strain 9B21) (CpMYRV-1).